A 494-amino-acid chain; its full sequence is Glutamyl-tRNA(Gln) amidotransferase subunit A (494 aa).

Residues lysine 79 and serine 159 each act as charge relay system in the active site. Catalysis depends on serine 183, which acts as the Acyl-ester intermediate.

Belongs to the amidase family. GatA subfamily. Heterotrimer of A, B and C subunits.

The catalysed reaction is L-glutamyl-tRNA(Gln) + L-glutamine + ATP + H2O = L-glutaminyl-tRNA(Gln) + L-glutamate + ADP + phosphate + H(+). Allows the formation of correctly charged Gln-tRNA(Gln) through the transamidation of misacylated Glu-tRNA(Gln) in organisms which lack glutaminyl-tRNA synthetase. The reaction takes place in the presence of glutamine and ATP through an activated gamma-phospho-Glu-tRNA(Gln). This chain is Glutamyl-tRNA(Gln) amidotransferase subunit A, found in Bartonella henselae (strain ATCC 49882 / DSM 28221 / CCUG 30454 / Houston 1) (Rochalimaea henselae).